We begin with the raw amino-acid sequence, 296 residues long: Lipoyl synthase (296 aa).

Residues cysteine 37, cysteine 42, cysteine 48, cysteine 63, cysteine 67, cysteine 70, and serine 276 each contribute to the [4Fe-4S] cluster site. The 217-residue stretch at 49-265 (WSKKHTTVMI…ERLAKTKGFL (217 aa)) folds into the Radical SAM core domain.

Belongs to the radical SAM superfamily. Lipoyl synthase family. Requires [4Fe-4S] cluster as cofactor.

Its subcellular location is the cytoplasm. The enzyme catalyses [[Fe-S] cluster scaffold protein carrying a second [4Fe-4S](2+) cluster] + N(6)-octanoyl-L-lysyl-[protein] + 2 oxidized [2Fe-2S]-[ferredoxin] + 2 S-adenosyl-L-methionine + 4 H(+) = [[Fe-S] cluster scaffold protein] + N(6)-[(R)-dihydrolipoyl]-L-lysyl-[protein] + 4 Fe(3+) + 2 hydrogen sulfide + 2 5'-deoxyadenosine + 2 L-methionine + 2 reduced [2Fe-2S]-[ferredoxin]. It functions in the pathway protein modification; protein lipoylation via endogenous pathway; protein N(6)-(lipoyl)lysine from octanoyl-[acyl-carrier-protein]: step 2/2. Catalyzes the radical-mediated insertion of two sulfur atoms into the C-6 and C-8 positions of the octanoyl moiety bound to the lipoyl domains of lipoate-dependent enzymes, thereby converting the octanoylated domains into lipoylated derivatives. The polypeptide is Lipoyl synthase (Rickettsia rickettsii (strain Iowa)).